The primary structure comprises 379 residues: Tryptophan--tRNA ligase, mitochondrial (379 aa).

ATP-binding positions include Gln-42 and 48–51 (HLGN). Positions 43-51 (PTGCFHLGN) match the 'HIGH' region motif. Asp-184 is a binding site for L-tryptophan. ATP is bound by residues 196–198 (GDD), Val-235, 244–248 (KMSKS), and Lys-247. The short motif at 244-248 (KMSKS) is the 'KMSKS' region element.

The protein belongs to the class-I aminoacyl-tRNA synthetase family. In terms of assembly, homodimer.

The protein resides in the mitochondrion matrix. The enzyme catalyses tRNA(Trp) + L-tryptophan + ATP = L-tryptophyl-tRNA(Trp) + AMP + diphosphate + H(+). In terms of biological role, mitochondrial aminoacyl-tRNA synthetase that catalyzes the attachment of tryptophan to tRNA(Trp). The sequence is that of Tryptophan--tRNA ligase, mitochondrial (MSW1) from Saccharomyces cerevisiae (strain ATCC 204508 / S288c) (Baker's yeast).